The chain runs to 296 residues: Large ribosomal subunit protein uL15m (296 aa).

A mitochondrion-targeting transit peptide spans 1-20 (MAASGGSGGKATELLRCLPR). The segment at 25-66 (NLRPNPGARHREKRRGRGIHGGRKSGRGHKGETQRGNQPRLG) is disordered. Basic residues predominate over residues 32–52 (ARHREKRRGRGIHGGRKSGRG).

It belongs to the universal ribosomal protein uL15 family. In terms of assembly, component of the mitochondrial ribosome large subunit (39S) which comprises a 16S rRNA and about 50 distinct proteins.

The protein resides in the mitochondrion. In Xenopus laevis (African clawed frog), this protein is Large ribosomal subunit protein uL15m (mrpl15).